A 309-amino-acid chain; its full sequence is Ribonuclease Z (309 aa).

Zn(2+) is bound by residues His63, His65, Asp67, His68, His141, Asp212, and His270. The Proton acceptor role is filled by Asp67.

The protein belongs to the RNase Z family. In terms of assembly, homodimer. The cofactor is Zn(2+).

The catalysed reaction is Endonucleolytic cleavage of RNA, removing extra 3' nucleotides from tRNA precursor, generating 3' termini of tRNAs. A 3'-hydroxy group is left at the tRNA terminus and a 5'-phosphoryl group is left at the trailer molecule.. Zinc phosphodiesterase, which displays some tRNA 3'-processing endonuclease activity. Probably involved in tRNA maturation, by removing a 3'-trailer from precursor tRNA. The protein is Ribonuclease Z of Lactobacillus johnsonii (strain CNCM I-12250 / La1 / NCC 533).